A 334-amino-acid polypeptide reads, in one-letter code: Phospho-N-acetylmuramoyl-pentapeptide-transferase (334 aa).

Transmembrane regions (helical) follow at residues 11–31 (GAGLTALAGALALGPVVIPLM), 55–75 (PTMGGVIFIIPAILATLIFAP), 84–104 (LIIALVLTVGHGLVGFADDYI), 124–144 (VGLAAVLGYGAVEVLGLGTAV), 158–178 (PLYYLLVLIMVWGTASAVNFA), 184–204 (LLGGLSVITFSFYGLVVALAL), 205–225 (GQTDMAVLGTALVGGVLGFLH), 233–253 (IFMGDVGSFALGGALAALAVL), 258–278 (FLLVIVGAVYVIEVISVILQV), and 311–331 (LFWGAGLLFTLLGWLVLPGML).

It belongs to the glycosyltransferase 4 family. MraY subfamily. It depends on Mg(2+) as a cofactor.

It is found in the cell membrane. The enzyme catalyses UDP-N-acetyl-alpha-D-muramoyl-L-alanyl-gamma-D-glutamyl-meso-2,6-diaminopimeloyl-D-alanyl-D-alanine + di-trans,octa-cis-undecaprenyl phosphate = di-trans,octa-cis-undecaprenyl diphospho-N-acetyl-alpha-D-muramoyl-L-alanyl-D-glutamyl-meso-2,6-diaminopimeloyl-D-alanyl-D-alanine + UMP. The protein operates within cell wall biogenesis; peptidoglycan biosynthesis. Catalyzes the initial step of the lipid cycle reactions in the biosynthesis of the cell wall peptidoglycan: transfers peptidoglycan precursor phospho-MurNAc-pentapeptide from UDP-MurNAc-pentapeptide onto the lipid carrier undecaprenyl phosphate, yielding undecaprenyl-pyrophosphoryl-MurNAc-pentapeptide, known as lipid I. This is Phospho-N-acetylmuramoyl-pentapeptide-transferase from Symbiobacterium thermophilum (strain DSM 24528 / JCM 14929 / IAM 14863 / T).